The primary structure comprises 297 residues: Transcription factor LRL3 (297 aa).

Residues 59–109 form a disordered region; sequence PDQFHHPQESGGPTMGSQEGLQPQGTVSTTSAPVVRQKPRVRARRGQATDP. Residues 73–90 are compositionally biased toward polar residues; it reads MGSQEGLQPQGTVSTTSA. Positions 105–118 are basic motif; degenerate; the sequence is QATDPHSIAERLRR. In terms of domain architecture, bHLH spans 105-154; sequence QATDPHSIAERLRRERIAERMKSLQELVPNTNKTDKASMLDEIIEYVRFL. Residues 119–154 form a helix-loop-helix motif region; it reads ERIAERMKSLQELVPNTNKTDKASMLDEIIEYVRFL.

Homodimer. Expressed in trichomes of the root maturation zone. Detected constitutively in flowers.

It localises to the nucleus. Functionally, transcription factor that regulates the development of root hairs. Does not seem to be involved in the regulation of sperm cell development. This Arabidopsis thaliana (Mouse-ear cress) protein is Transcription factor LRL3.